Reading from the N-terminus, the 203-residue chain is uncharacterized protein (203 aa).

Residues 89-109 form a helical membrane-spanning segment; that stretch reads CEIPFAACSVLSWSLPTIAAL.

The protein resides in the membrane. This is an uncharacterized protein from Saccharomyces cerevisiae (strain ATCC 204508 / S288c) (Baker's yeast).